The primary structure comprises 216 residues: Cytidylate kinase (216 aa).

7–15 (GPSGTGKST) provides a ligand contact to ATP.

This sequence belongs to the cytidylate kinase family. Type 1 subfamily.

Its subcellular location is the cytoplasm. The enzyme catalyses CMP + ATP = CDP + ADP. It catalyses the reaction dCMP + ATP = dCDP + ADP. The polypeptide is Cytidylate kinase (Chlamydia felis (strain Fe/C-56) (Chlamydophila felis)).